Reading from the N-terminus, the 279-residue chain is Fatty-acid-binding protein 1 (279 aa).

Arg103, Tyr116, and Ser183 together coordinate dodecanoate.

The protein belongs to the chalcone isomerase family. Expressed in developing cotyledons, young seedlings, roots, seeds, embryos, macrospores, preanthesis and tapetum. Restricted to developing and reproductive tissues.

Its subcellular location is the plastid. It is found in the chloroplast stroma. In terms of biological role, fatty-acid-binding protein. Interacts preferentially with saturated fatty acid. May be involved in alpha-linolenic (C18:3) metabolism. The protein is Fatty-acid-binding protein 1 (FAP1) of Arabidopsis thaliana (Mouse-ear cress).